Consider the following 491-residue polypeptide: Ketol-acid reductoisomerase (NADP(+)) (491 aa).

The KARI N-terminal Rossmann domain maps to 15 to 208 (AQLGKCRFMG…GGHRAGVLES (194 aa)). NADP(+) contacts are provided by residues 45-48 (CGAQ), arginine 68, arginine 76, serine 78, and 108-110 (DKQ). Histidine 132 is a catalytic residue. Residue glycine 158 participates in NADP(+) binding. 2 KARI C-terminal knotted domains span residues 209–344 (SFVA…TAPQ) and 345–484 (YEGK…MTDM). Residues aspartate 217, glutamate 221, glutamate 389, and glutamate 393 each contribute to the Mg(2+) site. Serine 414 is a substrate binding site.

It belongs to the ketol-acid reductoisomerase family. Mg(2+) serves as cofactor.

The catalysed reaction is (2R)-2,3-dihydroxy-3-methylbutanoate + NADP(+) = (2S)-2-acetolactate + NADPH + H(+). It catalyses the reaction (2R,3R)-2,3-dihydroxy-3-methylpentanoate + NADP(+) = (S)-2-ethyl-2-hydroxy-3-oxobutanoate + NADPH + H(+). Its pathway is amino-acid biosynthesis; L-isoleucine biosynthesis; L-isoleucine from 2-oxobutanoate: step 2/4. It participates in amino-acid biosynthesis; L-valine biosynthesis; L-valine from pyruvate: step 2/4. Its function is as follows. Involved in the biosynthesis of branched-chain amino acids (BCAA). Catalyzes an alkyl-migration followed by a ketol-acid reduction of (S)-2-acetolactate (S2AL) to yield (R)-2,3-dihydroxy-isovalerate. In the isomerase reaction, S2AL is rearranged via a Mg-dependent methyl migration to produce 3-hydroxy-3-methyl-2-ketobutyrate (HMKB). In the reductase reaction, this 2-ketoacid undergoes a metal-dependent reduction by NADPH to yield (R)-2,3-dihydroxy-isovalerate. This Escherichia coli O8 (strain IAI1) protein is Ketol-acid reductoisomerase (NADP(+)).